The sequence spans 445 residues: KICSTOR subunit 2 (445 aa).

The protein belongs to the KICS2 family. As to quaternary structure, part of the KICSTOR complex composed of KPTN, ITFG2, KICS2 and SZT2. SZT2 probably serves as a link between the other three proteins in the KICSTOR complex and may mediate the direct interaction with the GATOR complex via GATOR1. The KICSTOR complex interacts directly with the GATOR1 complex and most probably indirectly with the GATOR2 complex in an amino acid-independent manner.

It is found in the lysosome membrane. In terms of biological role, as part of the KICSTOR complex functions in the amino acid-sensing branch of the TORC1 signaling pathway. Recruits, in an amino acid-independent manner, the GATOR1 complex to the lysosomal membranes and allows its interaction with GATOR2 and the RAG GTPases. Functions upstream of the RAG GTPases and is required to negatively regulate mTORC1 signaling in absence of amino acids. In absence of the KICSTOR complex mTORC1 is constitutively localized to the lysosome and activated. The KICSTOR complex is also probably involved in the regulation of mTORC1 by glucose. This chain is KICSTOR subunit 2, found in Mus musculus (Mouse).